The chain runs to 161 residues: 6,7-dimethyl-8-ribityllumazine synthase (161 aa).

Residues Trp-26, 58 to 60 (SFE), and 81 to 83 (VVI) each bind 5-amino-6-(D-ribitylamino)uracil. Position 86-87 (86-87 (GT)) interacts with (2S)-2-hydroxy-3-oxobutyl phosphate. The active-site Proton donor is His-89. Residue Phe-114 participates in 5-amino-6-(D-ribitylamino)uracil binding. Arg-128 serves as a coordination point for (2S)-2-hydroxy-3-oxobutyl phosphate.

Belongs to the DMRL synthase family.

It catalyses the reaction (2S)-2-hydroxy-3-oxobutyl phosphate + 5-amino-6-(D-ribitylamino)uracil = 6,7-dimethyl-8-(1-D-ribityl)lumazine + phosphate + 2 H2O + H(+). It participates in cofactor biosynthesis; riboflavin biosynthesis; riboflavin from 2-hydroxy-3-oxobutyl phosphate and 5-amino-6-(D-ribitylamino)uracil: step 1/2. Catalyzes the formation of 6,7-dimethyl-8-ribityllumazine by condensation of 5-amino-6-(D-ribitylamino)uracil with 3,4-dihydroxy-2-butanone 4-phosphate. This is the penultimate step in the biosynthesis of riboflavin. This chain is 6,7-dimethyl-8-ribityllumazine synthase, found in Streptomyces coelicolor (strain ATCC BAA-471 / A3(2) / M145).